Reading from the N-terminus, the 395-residue chain is Prostaglandin D2 receptor 2 (395 aa).

Over 1 to 33 (MSANATLKPLCPILEQMSRLQSHSNTSIRYIDH) the chain is Extracellular. 2 N-linked (GlcNAc...) asparagine glycosylation sites follow: asparagine 4 and asparagine 25. Residues 34 to 56 (AAVLLHGLASLLGLVENGVILFV) traverse the membrane as a helical segment. Topologically, residues 57–67 (VGCRMRQTVVT) are cytoplasmic. A helical transmembrane segment spans residues 68–89 (TWVLHLALSDLLASASLPFFTY). Over 90–106 (FLAVGHSWELGTTFCKL) the chain is Extracellular. Cysteine 104 and cysteine 182 are oxidised to a cystine. A helical transmembrane segment spans residues 107-127 (HSSIFFLNMFASGFLLSAISL). The Cytoplasmic portion of the chain corresponds to 128–146 (DRCLQVVRPVWAQNHRTVA). The helical transmembrane segment at 147–168 (AAHKVCLVLWALAVLNTVPYFV) threads the bilayer. At 169 to 210 (FRDTISRLDGRIMCYYNVLLLNPGPDRDATCNSRQVALAVSK) the chain is on the extracellular side. Residues 211 to 231 (FLLAFLVPLAIIASSHAAVSL) form a helical membrane-spanning segment. The Cytoplasmic segment spans residues 232–247 (RLQHRGRRRPGRFVRL). The helical transmembrane segment at 248 to 269 (VAAVVAAFALCWGPYHVFSLLE) threads the bilayer. Topologically, residues 270–288 (ARAHANPGLRPLVWRGLPF) are extracellular. A helical transmembrane segment spans residues 289 to 308 (VTSLAFFNSVANPVLYVLTC). Residues 309-395 (PDMLRKLRRS…LNRALSSTSS (87 aa)) lie on the Cytoplasmic side of the membrane. Positions 330–333 (DSEL) match the Involved in the recycling of CRTH2 motif. A phosphoserine mark is found at serine 331 and serine 345. Residues 333–363 (LGGAGSSRRRRTSSTARSASPLALCSRPEEP) form a disordered region.

This sequence belongs to the G-protein coupled receptor 1 family. Phosphorylated. As to expression, widespread expression. High expression in stomach, small intestine, heart and thymus. Intermediate expression in colon, spinal cord and peripheral blood and low expression in brain, skeletal muscle and spleen. Expressed also on Th2- and Tc2- type cells, eosinophils and basophils.

It is found in the cell membrane. Receptor for prostaglandin D2 (PGD2). Coupled to the G(i)-protein. Receptor activation may result in pertussis toxin-sensitive decreases in cAMP levels and Ca(2+) mobilization. PI3K signaling is also implicated in mediating PTGDR2 effects. PGD2 induced receptor internalization. CRTH2 internalization can be regulated by diverse kinases such as, PKC, PKA, GRK2, GPRK5/GRK5 and GRK6. Receptor activation is responsible, at least in part, in immune regulation and allergic/inflammation responses. This Homo sapiens (Human) protein is Prostaglandin D2 receptor 2 (PTGDR2).